The sequence spans 591 residues: Parathyroid hormone/parathyroid hormone-related peptide receptor (591 aa).

Residues 1–26 (MGAARIAPSLALLLCCPVLSSAYALV) form the signal peptide. Residues 27 to 188 (DADDVFTKEE…REREVFDRLG (162 aa)) lie on the Extracellular side of the membrane. 3 cysteine pairs are disulfide-bonded: C48-C117, C108-C148, and C131-C170. Residues 67-104 (KGWTPASTSGKPRKEKASGKFYPESKENKDVPTGSRRR) are disordered. A compositionally biased stretch (basic and acidic residues) spans 81 to 96 (EKASGKFYPESKENKD). N-linked (GlcNAc...) asparagine glycans are attached at residues N151, N161, N166, and N176. The helical transmembrane segment at 189–212 (MIYTVGYSMSLASLTVAVLILAYF) threads the bilayer. Over 213-219 (RRLHCTR) the chain is Cytoplasmic. A helical membrane pass occupies residues 220-239 (NYIHMHMFLSFMLRAASIFV). At 240–282 (KDAVLYSGFTLDEAERLTEEELHIIAQVPPPPAAAAVGYAGCR) the chain is on the extracellular side. A helical membrane pass occupies residues 283-306 (VAVTFFLYFLATNYYWILVEGLYL). The Cytoplasmic segment spans residues 307–320 (HSLIFMAFFSEKKY). The chain crosses the membrane as a helical span at residues 321 to 342 (LWGFTIFGWGLPAVFVAVWVGV). Over 343-361 (RATLANTGCWDLSSGHKKW) the chain is Extracellular. Residues 362 to 382 (IIQVPILASVVLNFILFINII) traverse the membrane as a helical segment. Residues 383–409 (RVLATKLRETNAGRCDTRQQYRKLLRS) lie on the Cytoplasmic side of the membrane. Residues 410–428 (TLVLVPLFGVHYTVFMALP) form a helical membrane-spanning segment. Residues 429–440 (YTEVSGTLWQIQ) are Extracellular-facing. The helical transmembrane segment at 441–463 (MHYEMLFNSFQGFFVAIIYCFCN) threads the bilayer. The Cytoplasmic segment spans residues 464-591 (GEVQAEIRKS…LLQEEWETVM (128 aa)). The short motif at 474 to 477 (WSRW) is the Important for interaction with G proteins element. The interval 516–544 (LPLSPRLPPATTNGHSQLPGHAKPGAPAT) is disordered.

It belongs to the G-protein coupled receptor 2 family. In terms of assembly, homodimer in the absence of bound ligand. Peptide hormone binding leads to dissociation of the homodimer. N-glycosylated.

The protein resides in the cell membrane. In terms of biological role, G-protein-coupled receptor for parathyroid hormone (PTH) and for parathyroid hormone-related peptide (PTHLH). Ligand binding causes a conformation change that triggers signaling via guanine nucleotide-binding proteins (G proteins) and modulates the activity of downstream effectors, such as adenylate cyclase (cAMP). PTH1R is coupled to G(s) G alpha proteins and mediates activation of adenylate cyclase activity. PTHLH dissociates from PTH1R more rapidly than PTH; as consequence, the cAMP response induced by PTHLH decays faster than the response induced by PTH. This chain is Parathyroid hormone/parathyroid hormone-related peptide receptor (Pth1r), found in Rattus norvegicus (Rat).